Reading from the N-terminus, the 101-residue chain is Large ribosomal subunit protein bL28 (101 aa).

This sequence belongs to the bacterial ribosomal protein bL28 family.

In Caulobacter sp. (strain K31), this protein is Large ribosomal subunit protein bL28.